Consider the following 588-residue polypeptide: Putative ABC transporter ATP-binding protein PAM_020 (588 aa).

2 consecutive ABC transporter domains span residues Ile6–Glu247 and Leu317–Asn551. ATP-binding positions include Gly40–Ser47 and Gly351–Ser358.

This sequence belongs to the ABC transporter superfamily.

It localises to the cell membrane. Probably part of an ABC transporter complex. Responsible for energy coupling to the transport system. The chain is Putative ABC transporter ATP-binding protein PAM_020 from Onion yellows phytoplasma (strain OY-M).